The following is a 383-amino-acid chain: Lipoyl synthase, mitochondrial (383 aa).

Residues 1-19 constitute a mitochondrion transit peptide; the sequence is MHASTLTRCMRVAQNARCL. The tract at residues 69–97 is disordered; the sequence is DAAPGTKPSRKPNASNRKPKWLKAQPTQG. Positions 116, 121, 127, 147, 151, 154, and 362 each coordinate [4Fe-4S] cluster. In terms of domain architecture, Radical SAM core spans 132 to 351; the sequence is KDGIATATIM…QKVAEQMGFL (220 aa).

The protein belongs to the radical SAM superfamily. Lipoyl synthase family. Requires [4Fe-4S] cluster as cofactor.

The protein resides in the mitochondrion. The catalysed reaction is [[Fe-S] cluster scaffold protein carrying a second [4Fe-4S](2+) cluster] + N(6)-octanoyl-L-lysyl-[protein] + 2 oxidized [2Fe-2S]-[ferredoxin] + 2 S-adenosyl-L-methionine + 4 H(+) = [[Fe-S] cluster scaffold protein] + N(6)-[(R)-dihydrolipoyl]-L-lysyl-[protein] + 4 Fe(3+) + 2 hydrogen sulfide + 2 5'-deoxyadenosine + 2 L-methionine + 2 reduced [2Fe-2S]-[ferredoxin]. It functions in the pathway protein modification; protein lipoylation via endogenous pathway; protein N(6)-(lipoyl)lysine from octanoyl-[acyl-carrier-protein]: step 2/2. In terms of biological role, catalyzes the radical-mediated insertion of two sulfur atoms into the C-6 and C-8 positions of the octanoyl moiety bound to the lipoyl domains of lipoate-dependent enzymes, thereby converting the octanoylated domains into lipoylated derivatives. The sequence is that of Lipoyl synthase, mitochondrial from Phytophthora infestans (strain T30-4) (Potato late blight agent).